Consider the following 293-residue polypeptide: ATP synthase gamma chain (293 aa).

Belongs to the ATPase gamma chain family. F-type ATPases have 2 components, CF(1) - the catalytic core - and CF(0) - the membrane proton channel. CF(1) has five subunits: alpha(3), beta(3), gamma(1), delta(1), epsilon(1). CF(0) has three main subunits: a, b and c.

The protein localises to the cell membrane. In terms of biological role, produces ATP from ADP in the presence of a proton gradient across the membrane. The gamma chain is believed to be important in regulating ATPase activity and the flow of protons through the CF(0) complex. The polypeptide is ATP synthase gamma chain (Streptococcus agalactiae serotype III (strain NEM316)).